Reading from the N-terminus, the 301-residue chain is Probable alpha-L-glutamate ligase (301 aa).

The ATP-grasp domain maps to 104 to 287 (LQLLSRKGIG…IAGIIIQYLE (184 aa)). ATP contacts are provided by residues Lys141, 178-179 (EY), Asp187, and 211-213 (RSN). Mg(2+) contacts are provided by Asp248, Glu260, and Asn262. Asp248, Glu260, and Asn262 together coordinate Mn(2+).

Belongs to the RimK family. Requires Mg(2+) as cofactor. It depends on Mn(2+) as a cofactor.

This chain is Probable alpha-L-glutamate ligase, found in Pseudomonas aeruginosa (strain UCBPP-PA14).